Reading from the N-terminus, the 178-residue chain is MTHKSVRDYIRTIVDFPHEGILFRDVTTLFADPRGFRIAIDQLLAPYAGMRFDKVAGLEARGFILGGAVAHQLSTGFVPIRKKGKLPGRTISVSYQLEYGEAVVEVHDDAIQAGEKVLLVDDLLATGGTAEAGIKLIEQLGGQVVGCAFVVDLPDLGGRKRLEAMGMEVHALCAFEGL.

It belongs to the purine/pyrimidine phosphoribosyltransferase family. Homodimer.

The protein localises to the cytoplasm. It catalyses the reaction AMP + diphosphate = 5-phospho-alpha-D-ribose 1-diphosphate + adenine. It functions in the pathway purine metabolism; AMP biosynthesis via salvage pathway; AMP from adenine: step 1/1. Catalyzes a salvage reaction resulting in the formation of AMP, that is energically less costly than de novo synthesis. This chain is Adenine phosphoribosyltransferase, found in Cereibacter sphaeroides (strain KD131 / KCTC 12085) (Rhodobacter sphaeroides).